A 446-amino-acid polypeptide reads, in one-letter code: Transcription factor Dp-2 (446 aa).

At threonine 2 the chain carries N-acetylthreonine. Serine 24 and serine 42 each carry phosphoserine; by CDK2. Residues 60–82 (PQMIISTPQRIANSGSVLIGNPY) are interaction with CEBPA. Positions 103–118 (SDRKRAREFIDSDFSE) match the Nuclear localization signal motif. Serine 122 carries the phosphoserine modification. A DNA-binding region spans residues 129–210 (GKGLRHFSMK…PTGKKRNQVD (82 aa)). Residues 176-210 (DQENIRRRVYDALNVLMAMNIISSLPTGKKRNQVD) carry the DEF box motif. A dimerization region spans residues 219–292 (NLEIEKQRRI…RKTVIDCSIS (74 aa)). The tract at residues 229 to 261 (ERIKQKRAQLQELLLQQIAFKNLVQRNRQNEQQ) is DCB1. The tract at residues 274 to 330 (LPFIIINTSRKTVIDCSISSDKFEYLFNFDNTFEIHDDIEVLKRMGMSFGLESGKCS) is DCB2. Residues 404-446 (LPASNSHQSSSAASHFSESRGETPCSFNDEDEEDEEEDPSSPE) are disordered. Residues 406-419 (ASNSHQSSSAASHF) are compositionally biased toward low complexity. The segment covering 431 to 446 (NDEDEEDEEEDPSSPE) has biased composition (acidic residues).

The protein belongs to the E2F/DP family. Component of the DRTF1/E2F transcription factor complex. Forms heterodimers with E2F family members. The complex can interact with hypophosphorylated retinoblastoma protein RB1 and related proteins (RBL1 and RBL2) that inhibit the E2F transactivation domain. During the cell cycle, RB becomes phosphorylated in mid-to-late G1 phase, detaches from the DRTF1/E2F complex rendering E2F transcriptionally active. Interacts with GMCL. Component of the DREAM complex (also named LINC complex) at least composed of E2F4, E2F5, LIN9, LIN37, LIN52, LIN54, MYBL1, MYBL2, RBL1, RBL2, RBBP4, TFDP1 and TFDP2. The complex exists in quiescent cells where it represses cell cycle-dependent genes. It dissociates in S phase when LIN9, LIN37, LIN52 and LIN54 form a subcomplex that binds to MYBL2. The complex TFDP2:E2F1 interacts with CEBPA; the interaction prevents CEBPA binding to target gene promoters and represses its transcriptional activity. In terms of processing, phosphorylation by E2F1-bound cyclin A-CDK2, in the S phase, inhibits E2F-mediated DNA binding and transactivation. As to expression, expressed in all tissues examined. Highest levels in spleen and heart.

Its subcellular location is the nucleus. Can stimulate E2F-dependent transcription. Binds DNA cooperatively with E2F family members through the E2 recognition site, 5'-TTTC[CG]CGC-3', found in the promoter region of a number of genes whose products are involved in cell cycle regulation or in DNA replication. The TFDP2:E2F complex functions in the control of cell-cycle progression from G1 to S phase. The E2F1:DP complex appears to mediate both cell proliferation and apoptosis. Blocks adipocyte differentiation by repressing CEBPA binding to its target gene promoters. This chain is Transcription factor Dp-2 (Tfdp2), found in Mus musculus (Mouse).